The sequence spans 239 residues: 7-cyano-7-deazaguanine synthase (239 aa).

Residue 13 to 23 (FSGGQDSTTCL) participates in ATP binding. Residues Cys-192, Cys-201, Cys-204, and Cys-207 each coordinate Zn(2+).

Belongs to the QueC family. Zn(2+) is required as a cofactor.

The catalysed reaction is 7-carboxy-7-deazaguanine + NH4(+) + ATP = 7-cyano-7-deazaguanine + ADP + phosphate + H2O + H(+). It participates in purine metabolism; 7-cyano-7-deazaguanine biosynthesis. In terms of biological role, catalyzes the ATP-dependent conversion of 7-carboxy-7-deazaguanine (CDG) to 7-cyano-7-deazaguanine (preQ(0)). The sequence is that of 7-cyano-7-deazaguanine synthase from Shewanella sp. (strain MR-4).